A 309-amino-acid polypeptide reads, in one-letter code: Methionyl-tRNA formyltransferase (309 aa).

109 to 112 (SLLP) serves as a coordination point for (6S)-5,6,7,8-tetrahydrofolate.

This sequence belongs to the Fmt family.

It catalyses the reaction L-methionyl-tRNA(fMet) + (6R)-10-formyltetrahydrofolate = N-formyl-L-methionyl-tRNA(fMet) + (6S)-5,6,7,8-tetrahydrofolate + H(+). Functionally, attaches a formyl group to the free amino group of methionyl-tRNA(fMet). The formyl group appears to play a dual role in the initiator identity of N-formylmethionyl-tRNA by promoting its recognition by IF2 and preventing the misappropriation of this tRNA by the elongation apparatus. This Clostridium novyi (strain NT) protein is Methionyl-tRNA formyltransferase.